The chain runs to 394 residues: LL-diaminopimelate aminotransferase (394 aa).

2 residues coordinate substrate: Tyr14 and Gly41. Residues Tyr71, 104 to 105, Tyr128, Asn174, Tyr205, and 233 to 235 each bind pyridoxal 5'-phosphate; these read AK and SFS. Substrate contacts are provided by Lys105, Tyr128, and Asn174. The residue at position 236 (Lys236) is an N6-(pyridoxal phosphate)lysine. Pyridoxal 5'-phosphate-binding residues include Arg244 and Asn275. Residues Asn275 and Arg369 each coordinate substrate.

This sequence belongs to the class-I pyridoxal-phosphate-dependent aminotransferase family. LL-diaminopimelate aminotransferase subfamily. Homodimer. It depends on pyridoxal 5'-phosphate as a cofactor.

The enzyme catalyses (2S,6S)-2,6-diaminopimelate + 2-oxoglutarate = (S)-2,3,4,5-tetrahydrodipicolinate + L-glutamate + H2O + H(+). It functions in the pathway amino-acid biosynthesis; L-lysine biosynthesis via DAP pathway; LL-2,6-diaminopimelate from (S)-tetrahydrodipicolinate (aminotransferase route): step 1/1. Its function is as follows. Involved in the synthesis of meso-diaminopimelate (m-DAP or DL-DAP), required for both lysine and peptidoglycan biosynthesis. Catalyzes the direct conversion of tetrahydrodipicolinate to LL-diaminopimelate. Is also able to use meso-diaminopimelate, cystathionine, lysine or ornithine as substrates. The chain is LL-diaminopimelate aminotransferase from Chlamydia trachomatis serovar D (strain ATCC VR-885 / DSM 19411 / UW-3/Cx).